Consider the following 507-residue polypeptide: ATP synthase subunit alpha, chloroplastic (507 aa).

170–177 contributes to the ATP binding site; the sequence is GDRQTGKT.

Belongs to the ATPase alpha/beta chains family. In terms of assembly, F-type ATPases have 2 components, CF(1) - the catalytic core - and CF(0) - the membrane proton channel. CF(1) has five subunits: alpha(3), beta(3), gamma(1), delta(1), epsilon(1). CF(0) has four main subunits: a, b, b' and c.

It is found in the plastid. It localises to the chloroplast thylakoid membrane. It carries out the reaction ATP + H2O + 4 H(+)(in) = ADP + phosphate + 5 H(+)(out). In terms of biological role, produces ATP from ADP in the presence of a proton gradient across the membrane. The alpha chain is a regulatory subunit. The sequence is that of ATP synthase subunit alpha, chloroplastic from Cucumis sativus (Cucumber).